The primary structure comprises 422 residues: MHYVSISFTHKNTDIGVREKLSFSDNNRRREILRLIGANDSIAESMALSTCNRVEIFAYVLDTQSSIRHILNSISILTLVPFEALELRADIYEDQGAIHHLFAVASSLDSLVVGETQIAGQLKEAFKFAYDNEDCGVNISSAMHFAFKCAAEVRALTTISKNPVSVSSVAVAKAKEIYGNIGGMSAVVIGAGEMSRLAAQHLINAEVNVIIINRDEIKAQTLAKELGELASYASFDKLSEYINRYRLIFSATGAPNAIITNEIIEQKDFHRYFFDIAVPRDIDIEEDEYIHVYAVDDLEEIVRTNLALREEQASIAYSIVGKSTTSFFKWRLSEGSTPAIKALRLKAKDIACKEIEKAVKKGYLKCSDQDEASKLVHQVFKAFLHTPSVRLKEKNSDDILKALEYLFDIKIQKDENLEGNLK.

Substrate contacts are provided by residues 50 to 53 (TCNR), Ser110, 115 to 117 (ETQ), and Gln121. Cys51 functions as the Nucleophile in the catalytic mechanism. 190-195 (GAGEMS) lines the NADP(+) pocket.

The protein belongs to the glutamyl-tRNA reductase family. In terms of assembly, homodimer.

It carries out the reaction (S)-4-amino-5-oxopentanoate + tRNA(Glu) + NADP(+) = L-glutamyl-tRNA(Glu) + NADPH + H(+). It participates in porphyrin-containing compound metabolism; protoporphyrin-IX biosynthesis; 5-aminolevulinate from L-glutamyl-tRNA(Glu): step 1/2. Its function is as follows. Catalyzes the NADPH-dependent reduction of glutamyl-tRNA(Glu) to glutamate 1-semialdehyde (GSA). The chain is Glutamyl-tRNA reductase from Campylobacter fetus subsp. fetus (strain 82-40).